Consider the following 221-residue polypeptide: Sugar transporter SWEET1 (221 aa).

Helical transmembrane passes span 3–23, 42–62, 68–88, 96–116, 126–146, 160–180, and 186–206; these read AGGF…LGMF, VQFL…SYGA, ILIV…LAYL, VVLL…GYFW, LQLL…SPLA, LSYP…LYGF, and YIMV…WLFW. The 85-residue stretch at 10 to 94 folds into the MtN3/slv 1 domain; that stretch reads LIYGACVVFT…LAYLHYCPRK (85 aa). The region spanning 127–212 is the MtN3/slv 2 domain; that stretch reads QLLGLFCSVF…WLFWKYPQEQ (86 aa). Residues 149–221 are mediates interaction with TRPV2; the sequence is AKVIQTKSTQ…QDRNYWFLQT (73 aa).

The protein belongs to the SWEET sugar transporter family. As to quaternary structure, interacts with TRPV2; the interaction probably occurs intracellularly and depends on TRPV2 N-glycosylation.

It is found in the golgi apparatus membrane. It localises to the cell membrane. In terms of biological role, mediates sugar transport across membranes. May stimulate V(D)J recombination by the activation of RAG1. In Papio anubis (Olive baboon), this protein is Sugar transporter SWEET1 (SLC50A1).